The primary structure comprises 98 residues: Flagellar hook-basal body complex protein FliE (98 aa).

The segment covering 1–23 (MNNINDLRLNNNISNTNKSQNST) has biased composition (low complexity). The segment at 1–24 (MNNINDLRLNNNISNTNKSQNSTG) is disordered.

This sequence belongs to the FliE family.

It localises to the bacterial flagellum basal body. This chain is Flagellar hook-basal body complex protein FliE, found in Campylobacter jejuni subsp. jejuni serotype O:2 (strain ATCC 700819 / NCTC 11168).